The sequence spans 579 residues: DNA ligase 1 (579 aa).

Glutamate 244 contributes to the ATP binding site. Lysine 246 (N6-AMP-lysine intermediate) is an active-site residue. Positions 251, 266, 296, 342, 419, and 425 each coordinate ATP.

The protein belongs to the ATP-dependent DNA ligase family. The cofactor is Mg(2+).

It catalyses the reaction ATP + (deoxyribonucleotide)n-3'-hydroxyl + 5'-phospho-(deoxyribonucleotide)m = (deoxyribonucleotide)n+m + AMP + diphosphate.. Functionally, DNA ligase that seals nicks in double-stranded DNA during DNA replication, DNA recombination and DNA repair. The protein is DNA ligase 1 of Methanosarcina mazei (strain ATCC BAA-159 / DSM 3647 / Goe1 / Go1 / JCM 11833 / OCM 88) (Methanosarcina frisia).